The primary structure comprises 340 residues: MAASHPYFNLPDFTQPSPPSTPSSLTSNHHNRCGPSNATKGLFVALLGGGLSAGFVGPFSRMAYQTSQLPSLELLIFRCLFHLPIALILKFRGDPLLGPPDVRVRAFLHAILNVLSIGCAYSAVQVVPAGNAVTVRKGSSTVCSALLALCLESQRLSGYAWCGLFGSTLGLIIIVGPGLGTLQEGTTGLYTALGYVLAFLGGLALSLGLQVYRSLHFPSCLPTVAFLFGLVGLIVSVPGLFVLQTPVLPQDTLSWSCMVAVGLLALVSFVCVSYAVTKAHPALVCAVLHSEVVVALMLQYYVLYETVAPSDIMGAGVVLGSIAIITAQNFSCDKEGQVEE.

The interval 11-31 (PDFTQPSPPSTPSSLTSNHHN) is disordered. A run of 9 helical transmembrane segments spans residues 39–59 (TKGLFVALLGGGLSAGFVGPF), 69–89 (LPSLELLIFRCLFHLPIALIL), 107–127 (FLHAILNVLSIGCAYSAVQVV), 160–180 (AWCGLFGSTLGLIIIVGPGLG), 189–209 (LYTALGYVLAFLGGLALSLGL), 223–243 (TVAFLFGLVGLIVSVPGLFVL), 257–277 (CMVAVGLLALVSFVCVSYAVT), 283–303 (LVCAVLHSEVVVALMLQYYVL), and 307–327 (VAPSDIMGAGVVLGSIAIITA). Positions 51-176 (LSAGFVGPFS…STLGLIIIVG (126 aa)) constitute an EamA 1 domain. Residues 223–327 (TVAFLFGLVG…VLGSIAIITA (105 aa)) enclose the EamA 2 domain.

This sequence belongs to the SLC35G solute transporter family.

It localises to the membrane. This chain is Solute carrier family 35 member G3 (Slc35g3), found in Rattus norvegicus (Rat).